Consider the following 451-residue polypeptide: G-protein coupled receptor 61 (451 aa).

Residues 1 to 14 are compositionally biased toward low complexity; that stretch reads MESSPIPQSSGNSS. Positions 1–31 are disordered; the sequence is MESSPIPQSSGNSSTLGRVPQTPGPSTASGV. The Extracellular portion of the chain corresponds to 1–44; the sequence is MESSPIPQSSGNSSTLGRVPQTPGPSTASGVPEVGLRDVASESV. N-linked (GlcNAc...) asparagine glycosylation occurs at N12. Residues 45 to 67 traverse the membrane as a helical segment; it reads ALFFMLLLDLTAVAGNAAVMAVI. Residues 68 to 75 are Cytoplasmic-facing; that stretch reads AKTPALRK. Residues 76–98 traverse the membrane as a helical segment; the sequence is FVFVFHLCLVDLLAALTLMPLAM. The Extracellular portion of the chain corresponds to 99–112; that stretch reads LSSSALFDHALFGE. Residues 113–135 traverse the membrane as a helical segment; the sequence is VACRLYLFLSVCFVSLAILSVSA. The Cytoplasmic portion of the chain corresponds to 136–155; sequence INVERYYYVVHPMRYEVRMT. Residues 156–178 traverse the membrane as a helical segment; the sequence is LGLVASVLVGVWVKALAMASVPV. The Extracellular segment spans residues 179-206; sequence LGRVSWEEGAPSVPPGCSLQWSHSAYCQ. A helical transmembrane segment spans residues 207 to 229; it reads LFVVVFAVLYFLLPLLLILVVYC. The Cytoplasmic portion of the chain corresponds to 230–287; that stretch reads SMFRVARVAAMQHGPLPTWMETPRQRSESLSSRSTMVTSSGAPQTTPHRTFGGGKAAV. A helical membrane pass occupies residues 288–310; it reads VLLAVGGQFLLCWLPYFSFHLYV. Residues 311–324 are Extracellular-facing; the sequence is ALSAQPISTGQVES. The helical transmembrane segment at 325 to 344 threads the bilayer; the sequence is VVTWIGYFCFTSNPFFYGCL. Topologically, residues 345-451 are cytoplasmic; sequence NRQIRGELSK…RPAASPRLES (107 aa).

It belongs to the G-protein coupled receptor 1 family. Forms heterodimer with MTNR1B. Interacts with ARRB1 and ARRB2 in a spontaneous and agonist-independent manner; leading to the internalization of GPR61 in the endosomal compartment. Expressed in brain; detected in frontal and temporal lobes, occipital pole, amygdala and hippocampus. Also expressed in testis and T cells, B cells, and monocyte. Low expression in many other tissues. Widely expressed in the hippocampus (at protein level).

The protein localises to the cell membrane. Its subcellular location is the endosome membrane. Its function is as follows. Orphan G-protein coupled receptor. Constitutively activates the G(s)-alpha/cAMP signaling pathway. Shows a reciprocal regulatory interaction with the melatonin receptor MTNR1B most likely through receptor heteromerization. May be involved in the regulation of food intake and body weight. This Homo sapiens (Human) protein is G-protein coupled receptor 61 (GPR61).